A 105-amino-acid chain; its full sequence is MNKFYIYNNFKNEALINIKVKPYSKQNLINNFVIINNIPYIKLSITAAPEQGKANEGIINYLAKEWKLSRSSIEIIKGHTHSLKTILIKNINEDYLNLIINSYIK.

This sequence belongs to the UPF0235 family.

The protein is UPF0235 protein RT0827 of Rickettsia typhi (strain ATCC VR-144 / Wilmington).